The chain runs to 173 residues: MQFPMGPACIFLRKGIAEKQRERPLGQDELDELREAFLEFDKDQDGFISYKDLGNLMRTMGYMPTEMELTELGQQIRMNLGGRVDFEDFVELMTPKLLAETAGMIGVQEMRDAFKEFDANGDGEITLAELQQAMQRLLGEKLTPREIAEVVQEADINGDGTVDFEEFVKMMSR.

4 EF-hand domains span residues 28-63 (DELD…MGYM), 82-99 (GRVD…KLLA), 105-140 (IGVQ…LLGE), and 142-173 (LTPR…MMSR). Positions 41, 43, 45, and 52 each coordinate Ca(2+). Residues aspartate 118, asparagine 120, aspartate 122, glutamate 124, glutamate 129, aspartate 155, asparagine 157, aspartate 159, threonine 161, and glutamate 166 each coordinate Ca(2+).

As to quaternary structure, interacts with CACNA1C (via C-terminal CDB motif) in a calcium-dependent manner. Interacts with STXBP1. Interacts with MYO6. Expressed in inner and outer plexiform layers of the retina, and retinal bipolar cells (at protein level). Expressed in the inner hair cells (IHC) of the cochlea.

It is found in the cytoplasm. Its function is as follows. Inhibits calcium-dependent inactivation of L-type calcium channel and shifts voltage dependence of activation to more depolarized membrane potentials. Involved in the transmission of light signals. May positively regulate neurotransmitter vesicle endocytosis and exocytosis in a salt-dependent manner. May play a role in the extension and network organization of neurites. This Mus musculus (Mouse) protein is Calcium-binding protein 5 (Cabp5).